The sequence spans 421 residues: Gamma-glutamyl phosphate reductase (421 aa).

The protein belongs to the gamma-glutamyl phosphate reductase family.

The protein localises to the cytoplasm. It catalyses the reaction L-glutamate 5-semialdehyde + phosphate + NADP(+) = L-glutamyl 5-phosphate + NADPH + H(+). It participates in amino-acid biosynthesis; L-proline biosynthesis; L-glutamate 5-semialdehyde from L-glutamate: step 2/2. Catalyzes the NADPH-dependent reduction of L-glutamate 5-phosphate into L-glutamate 5-semialdehyde and phosphate. The product spontaneously undergoes cyclization to form 1-pyrroline-5-carboxylate. The protein is Gamma-glutamyl phosphate reductase of Pseudomonas fluorescens (strain SBW25).